A 1091-amino-acid chain; its full sequence is ATP-citrate synthase (1091 aa).

The ATP-grasp domain occupies 4–265 (KAISEQTGKE…LDAKSGASLK (262 aa)). ATP contacts are provided by K58, R66, G67, P109, V111, and E118. Y131 carries the post-translational modification Phosphotyrosine. D216 is a binding site for ATP. D257, S260, and A262 together coordinate Mg(2+). The residue at position 263 (S263) is a Phosphoserine. Citrate is bound by residues G309, N346, T348, Y364, and R379. Over residues 442-457 (SGSTSTPAPSRTASFS) the composition is skewed to low complexity. The disordered stretch occupies residues 442–471 (SGSTSTPAPSRTASFSESRTDEVAPAKKAK). T447 carries the phosphothreonine modification. S451 bears the Phosphoserine mark. At S455 the chain carries Phosphoserine; by PKA and PKB/AKT1 or PKB/AKT2 or BCKDK. At S459 the chain carries Phosphoserine. 3 positions are modified to N6-acetyllysine; alternate: K530, K536, and K544. Residues K530, K536, and K544 each participate in a glycyl lysine isopeptide (Lys-Gly) (interchain with G-Cter in ubiquitin); alternate cross-link. Phosphothreonine is present on T629. Phosphoserine is present on S653. At Y672 the chain carries Phosphotyrosine. The active-site Tele-phosphohistidine intermediate is the H750. 769–779 (LKEAGVFVPRS) contacts CoA. S829 carries the phosphoserine modification. K938, K958, K968, and K1067 each carry N6-acetyllysine. Position 1090 is a phosphoserine (S1090).

It in the N-terminal section; belongs to the succinate/malate CoA ligase beta subunit family. In the C-terminal section; belongs to the succinate/malate CoA ligase alpha subunit family. As to quaternary structure, homotetramer. Requires Mg(2+) as cofactor. In terms of processing, phosphorylated by PKA and GSK3 in a sequential manner; phosphorylation results in activation of its activity. Phosphorylation on Thr-447 and Ser-451 depends on the phosphorylation state of Ser-455. Phosphorylation on Ser-455 is decreased by prior phosphorylation on the other 2 residues. Phosphorylated at Ser-455 by BCKDK and dephosphorylated by protein phosphatase PPM1K. ISGylated. Post-translationally, acetylated at Lys-530, Lys-536 and Lys-544 by KAT2B/PCAF. Acetylation is promoted by glucose and stabilizes the protein, probably by preventing ubiquitination at the same sites. Acetylation promotes de novo lipid synthesis. Deacetylated by SIRT2. In terms of processing, ubiquitinated at Lys-530, Lys-536 and Lys-544 by the BCR(KLHL25) E3 ubiquitin ligase complex and UBR4, leading to its degradation. Ubiquitination is probably inhibited by acetylation at same site. BCR(KLHL25)-mediated degradation of ACLY promotes fatty acid oxidation and is required for differentiation of inducible regulatory T (iTreg) cells.

The protein resides in the cytoplasm. It localises to the cytosol. It carries out the reaction oxaloacetate + acetyl-CoA + ADP + phosphate = citrate + ATP + CoA. With respect to regulation, phosphorylation results in activation of its activity. Glucose 6-phosphate, fructose 6-phosphate, fructose 2,6-bisphosphate, ribulose 5-phosphate, and fructose 1,6-bisphosphate also act as activators. Its function is as follows. Catalyzes the cleavage of citrate into oxaloacetate and acetyl-CoA, the latter serving as common substrate in multiple biochemical reactions in protein, carbohydrate and lipid metabolism. The chain is ATP-citrate synthase (ACLY) from Bos taurus (Bovine).